The sequence spans 512 residues: GMP synthase [glutamine-hydrolyzing] (512 aa).

Residues 3–196 (NILILDFGSQ…VKHICQTSET (194 aa)) enclose the Glutamine amidotransferase type-1 domain. Cys80 (nucleophile) is an active-site residue. Active-site residues include His169 and Glu171. Residues 197–387 (WKIETIEKQL…LGLPDVLISR (191 aa)) form the GMPS ATP-PPase domain. Residue 225 to 231 (SGGVDSS) participates in ATP binding.

In terms of assembly, homodimer.

It carries out the reaction XMP + L-glutamine + ATP + H2O = GMP + L-glutamate + AMP + diphosphate + 2 H(+). It participates in purine metabolism; GMP biosynthesis; GMP from XMP (L-Gln route): step 1/1. In terms of biological role, catalyzes the synthesis of GMP from XMP. This is GMP synthase [glutamine-hydrolyzing] (guaA) from Chlamydia muridarum (strain MoPn / Nigg).